A 397-amino-acid chain; its full sequence is B3 domain-containing protein At4g34400 (397 aa).

The TF-B3 DNA-binding region spans 14–107; sequence PRFFTVFVSH…IFEVSIFRGY (94 aa). The interval 118-255 is disordered; that stretch reads ELEEEEEDSV…SSYAPDKEDT (138 aa). The segment covering 137–160 has biased composition (basic and acidic residues); that stretch reads TGAKSEMKNTVPEGRDKGKSKVEV. 3 stretches are compositionally biased toward acidic residues: residues 161–186, 212–227, and 235–246; these read VEDS…TDTD, SSDD…DSDY, and DIEENSISEEDS.

The protein localises to the nucleus. This is B3 domain-containing protein At4g34400 from Arabidopsis thaliana (Mouse-ear cress).